The following is a 281-amino-acid chain: NADPH-dependent 7-cyano-7-deazaguanine reductase (281 aa).

87–89 (IES) serves as a coordination point for substrate. An NADPH-binding site is contributed by 89–90 (SK). Cys-188 functions as the Thioimide intermediate in the catalytic mechanism. Asp-195 functions as the Proton donor in the catalytic mechanism. 227–228 (HE) is a substrate binding site. 256 to 257 (RG) serves as a coordination point for NADPH. The tract at residues 261-281 (INPYRSTEQDKPAHNHRMARQ) is disordered.

This sequence belongs to the GTP cyclohydrolase I family. QueF type 2 subfamily. Homodimer.

Its subcellular location is the cytoplasm. It catalyses the reaction 7-aminomethyl-7-carbaguanine + 2 NADP(+) = 7-cyano-7-deazaguanine + 2 NADPH + 3 H(+). It participates in tRNA modification; tRNA-queuosine biosynthesis. Functionally, catalyzes the NADPH-dependent reduction of 7-cyano-7-deazaguanine (preQ0) to 7-aminomethyl-7-deazaguanine (preQ1). This chain is NADPH-dependent 7-cyano-7-deazaguanine reductase, found in Vibrio parahaemolyticus serotype O3:K6 (strain RIMD 2210633).